The primary structure comprises 340 residues: Phosphoribosylformylglycinamidine cyclo-ligase (340 aa).

The protein belongs to the AIR synthase family.

The protein localises to the cytoplasm. It carries out the reaction 2-formamido-N(1)-(5-O-phospho-beta-D-ribosyl)acetamidine + ATP = 5-amino-1-(5-phospho-beta-D-ribosyl)imidazole + ADP + phosphate + H(+). The protein operates within purine metabolism; IMP biosynthesis via de novo pathway; 5-amino-1-(5-phospho-D-ribosyl)imidazole from N(2)-formyl-N(1)-(5-phospho-D-ribosyl)glycinamide: step 2/2. This chain is Phosphoribosylformylglycinamidine cyclo-ligase, found in Macrococcus caseolyticus (strain JCSC5402) (Macrococcoides caseolyticum).